The chain runs to 147 residues: Large ribosomal subunit protein uL11 (147 aa).

The protein belongs to the universal ribosomal protein uL11 family. Part of the ribosomal stalk of the 50S ribosomal subunit. Interacts with L10 and the large rRNA to form the base of the stalk. L10 forms an elongated spine to which L12 dimers bind in a sequential fashion forming a multimeric L10(L12)X complex. In terms of processing, one or more lysine residues are methylated.

Forms part of the ribosomal stalk which helps the ribosome interact with GTP-bound translation factors. In Bacteroides thetaiotaomicron (strain ATCC 29148 / DSM 2079 / JCM 5827 / CCUG 10774 / NCTC 10582 / VPI-5482 / E50), this protein is Large ribosomal subunit protein uL11.